A 243-amino-acid chain; its full sequence is Peptidase E (243 aa).

Residues Ser-118, Asp-133, and His-155 each act as charge relay system in the active site.

This sequence belongs to the peptidase S51 family.

It localises to the cytoplasm. The catalysed reaction is Dipeptidase E catalyzes the hydrolysis of dipeptides Asp-|-Xaa. It does not act on peptides with N-terminal Glu, Asn or Gln, nor does it cleave isoaspartyl peptides.. Hydrolyzes dipeptides containing N-terminal aspartate residues. May play a role in allowing the cell to use peptide aspartate to spare carbon otherwise required for the synthesis of the aspartate family of amino acids. In Streptomyces coelicolor (strain ATCC BAA-471 / A3(2) / M145), this protein is Peptidase E.